Here is a 1171-residue protein sequence, read N- to C-terminus: Zinc finger BED domain-containing protein 4 (1171 aa).

The disordered stretch occupies residues 25–62; that stretch reads EEEDDDGIPPDSLERMDFKSEQEDMKQTDSGGERAGLG. The segment covering 36–51 has biased composition (basic and acidic residues); that stretch reads SLERMDFKSEQEDMKQ. Lysine 43 is covalently cross-linked (Glycyl lysine isopeptide (Lys-Gly) (interchain with G-Cter in SUMO2)). 2 BED-type zinc fingers span residues 115 to 172 and 285 to 342; these read RKKS…LIQE and RRRS…VLQE. Positions 136, 139, 160, 165, 306, 309, 330, and 335 each coordinate Zn(2+). Low complexity predominate over residues 362–385; that stretch reads LLPPEGELSSVSSSPVKPVRESPS. Residues 362–405 are disordered; it reads LLPPEGELSSVSSSPVKPVRESPSASSSPDRLTEDLQSHLNPGD. 2 BED-type zinc fingers span residues 456 to 512 and 558 to 615; these read RLKS…VGSQ and KKTS…LKTE. Residues cysteine 477 and cysteine 480 each coordinate Zn(2+). Residue lysine 489 forms a Glycyl lysine isopeptide (Lys-Gly) (interchain with G-Cter in SUMO2) linkage. The Zn(2+) site is built by histidine 500, histidine 505, cysteine 579, cysteine 582, histidine 603, and histidine 608. The disordered stretch occupies residues 614–640; the sequence is TEVSETARPSSPDTRVPRGTELSGASS. Serine 624 carries the post-translational modification Phosphoserine. The tract at residues 1086–1171 is required for homodimerization and nuclear accumulation; the sequence is LAYLEEEVLE…VNLPLIYFQY (86 aa).

Homodimer; via C-terminus. Interacts with MYH9. Interacts with SAFB/SAFB1. In terms of tissue distribution, expressed in testis, heart, lung, and weakly expressed in brain, liver, muscle, placenta and small intestine. Expressed in the retina, found in the cone photoreceptors, Mueller cells, cone pedicles and in the innermost retinal layer.

Its subcellular location is the nucleus. The protein resides in the cytoplasm. It localises to the photoreceptor inner segment. Its function is as follows. Transcriptional regulator that binds to poly-guanine tracts in gene promoters and activates transcription. Able to bind single- and double-stranded DNA and RNA. In Homo sapiens (Human), this protein is Zinc finger BED domain-containing protein 4 (ZBED4).